The chain runs to 172 residues: Ribosome maturation factor RimM (172 aa).

A PRC barrel domain is found at 95–168 (AEGEFYYHQI…RVDVEIMEGL (74 aa)).

This sequence belongs to the RimM family. In terms of assembly, binds ribosomal protein uS19.

The protein resides in the cytoplasm. Its function is as follows. An accessory protein needed during the final step in the assembly of 30S ribosomal subunit, possibly for assembly of the head region. Essential for efficient processing of 16S rRNA. May be needed both before and after RbfA during the maturation of 16S rRNA. It has affinity for free ribosomal 30S subunits but not for 70S ribosomes. This Streptococcus equi subsp. zooepidemicus (strain MGCS10565) protein is Ribosome maturation factor RimM.